The chain runs to 433 residues: GTPase Obg (433 aa).

An Obg domain is found at 1–159 (MKFVDSADLI…FEIRAELKVL (159 aa)). The OBG-type G domain maps to 160–332 (ADVGFVGLPN…LLFMIYEELK (173 aa)). GTP is bound by residues 166-173 (GLPNAGKS), 191-195 (FTTIN), 213-216 (DLPG), 284-287 (NKMD), and 313-315 (SGL). Residues serine 173 and threonine 193 each coordinate Mg(2+). Residues 355 to 433 (KFEEQKEDIQ…VFDYELEWTD (79 aa)) form the OCT domain.

The protein belongs to the TRAFAC class OBG-HflX-like GTPase superfamily. OBG GTPase family. As to quaternary structure, monomer. It depends on Mg(2+) as a cofactor.

The protein resides in the cytoplasm. An essential GTPase which binds GTP, GDP and possibly (p)ppGpp with moderate affinity, with high nucleotide exchange rates and a fairly low GTP hydrolysis rate. Plays a role in control of the cell cycle, stress response, ribosome biogenesis and in those bacteria that undergo differentiation, in morphogenesis control. This is GTPase Obg from Mycoplasma capricolum subsp. capricolum (strain California kid / ATCC 27343 / NCTC 10154).